Consider the following 83-residue polypeptide: RNA-binding protein Hfq (83 aa).

The Sm domain maps to 9–68 (DPYLNILRKERIPVSIFLVNGIKLQGQIESFDQFVILLRNTVSQMVYKHAISTVVPSRNV).

This sequence belongs to the Hfq family. In terms of assembly, homohexamer.

Its function is as follows. RNA chaperone that binds small regulatory RNA (sRNAs) and mRNAs to facilitate mRNA translational regulation in response to envelope stress, environmental stress and changes in metabolite concentrations. Also binds with high specificity to tRNAs. This is RNA-binding protein Hfq from Chromohalobacter salexigens (strain ATCC BAA-138 / DSM 3043 / CIP 106854 / NCIMB 13768 / 1H11).